The sequence spans 115 residues: Flagellar transcriptional regulator FlhD (115 aa).

This sequence belongs to the FlhD family. In terms of assembly, homodimer; disulfide-linked. Forms a heterohexamer composed of two FlhC and four FlhD subunits. Each FlhC binds a FlhD dimer, forming a heterotrimer, and a hexamer assembles by dimerization of two heterotrimers.

It is found in the cytoplasm. Its function is as follows. Functions in complex with FlhC as a master transcriptional regulator that regulates transcription of several flagellar and non-flagellar operons by binding to their promoter region. Activates expression of class 2 flagellar genes, including fliA, which is a flagellum-specific sigma factor that turns on the class 3 genes. Also regulates genes whose products function in a variety of physiological pathways. The chain is Flagellar transcriptional regulator FlhD from Edwardsiella ictaluri (strain 93-146).